We begin with the raw amino-acid sequence, 358 residues long: 3-dehydroquinate synthase (358 aa).

NAD(+) contacts are provided by residues 105 to 109, 129 to 130, Lys142, Lys151, and 169 to 172; these read GVVGD, TT, and TLKT. Glu184, His245, and His262 together coordinate Zn(2+).

The protein belongs to the sugar phosphate cyclases superfamily. Dehydroquinate synthase family. It depends on NAD(+) as a cofactor. Requires Co(2+) as cofactor. Zn(2+) is required as a cofactor.

Its subcellular location is the cytoplasm. It carries out the reaction 7-phospho-2-dehydro-3-deoxy-D-arabino-heptonate = 3-dehydroquinate + phosphate. It functions in the pathway metabolic intermediate biosynthesis; chorismate biosynthesis; chorismate from D-erythrose 4-phosphate and phosphoenolpyruvate: step 2/7. In terms of biological role, catalyzes the conversion of 3-deoxy-D-arabino-heptulosonate 7-phosphate (DAHP) to dehydroquinate (DHQ). This is 3-dehydroquinate synthase from Enterococcus faecalis (strain ATCC 700802 / V583).